The following is a 492-amino-acid chain: Probable cobyric acid synthase (492 aa).

In terms of domain architecture, GATase cobBQ-type spans 252–444 (PIEVNIVKFS…FHGILENFEF (193 aa)). Cys-330 functions as the Nucleophile in the catalytic mechanism. The active site involves His-436.

Belongs to the CobB/CobQ family. CobQ subfamily.

The protein operates within cofactor biosynthesis; adenosylcobalamin biosynthesis. In terms of biological role, catalyzes amidations at positions B, D, E, and G on adenosylcobyrinic A,C-diamide. NH(2) groups are provided by glutamine, and one molecule of ATP is hydrogenolyzed for each amidation. This is Probable cobyric acid synthase from Methanococcus maripaludis (strain C7 / ATCC BAA-1331).